The following is a 361-amino-acid chain: Peptide chain release factor 1 (361 aa).

Glutamine 235 bears the N5-methylglutamine mark. Positions 288–307 are disordered; it reads AARSADRKDQVGSGDRSERI.

This sequence belongs to the prokaryotic/mitochondrial release factor family. Post-translationally, methylated by PrmC. Methylation increases the termination efficiency of RF1.

It localises to the cytoplasm. Functionally, peptide chain release factor 1 directs the termination of translation in response to the peptide chain termination codons UAG and UAA. This Nitrobacter hamburgensis (strain DSM 10229 / NCIMB 13809 / X14) protein is Peptide chain release factor 1.